Consider the following 196-residue polypeptide: dITP/XTP pyrophosphatase (196 aa).

8 to 13 (TKNEGK) contacts substrate. Residues glutamate 41 and aspartate 70 each contribute to the Mg(2+) site. Residue aspartate 70 is the Proton acceptor of the active site. Substrate contacts are provided by residues serine 71, 153-156 (FGYD), lysine 176, and 181-182 (HR).

This sequence belongs to the HAM1 NTPase family. Homodimer. It depends on Mg(2+) as a cofactor.

The catalysed reaction is XTP + H2O = XMP + diphosphate + H(+). The enzyme catalyses dITP + H2O = dIMP + diphosphate + H(+). It catalyses the reaction ITP + H2O = IMP + diphosphate + H(+). Functionally, pyrophosphatase that catalyzes the hydrolysis of nucleoside triphosphates to their monophosphate derivatives, with a high preference for the non-canonical purine nucleotides XTP (xanthosine triphosphate), dITP (deoxyinosine triphosphate) and ITP. Seems to function as a house-cleaning enzyme that removes non-canonical purine nucleotides from the nucleotide pool, thus preventing their incorporation into DNA/RNA and avoiding chromosomal lesions. The sequence is that of dITP/XTP pyrophosphatase from Bacillus licheniformis (strain ATCC 14580 / DSM 13 / JCM 2505 / CCUG 7422 / NBRC 12200 / NCIMB 9375 / NCTC 10341 / NRRL NRS-1264 / Gibson 46).